Consider the following 1094-residue polypeptide: Potassium-transporting ATPase alpha chain 2 (1094 aa).

Positions 1–21 (MAGGAHRADRATGEERKEGGG) are enriched in basic and acidic residues. The segment at 1–37 (MAGGAHRADRATGEERKEGGGRWRAPHSPSPPGPRGC) is disordered. Positions 28-37 (SPSPPGPRGC) are enriched in pro residues. The Cytoplasmic segment spans residues 56–157 (RYCTLLLFQR…NALTPPKQTP (102 aa)). The helical transmembrane segment at 158–178 (EIIKFLKQMVGGFSILLWVGA) threads the bilayer. The Lumenal portion of the chain corresponds to 179-201 (VLCWIAFGIQYVSNPSASLDRVY). Residues 202–222 (LGTVLAVVVILTGIFAYYQEA) traverse the membrane as a helical segment. At 223 to 358 (KSTNIMASFC…NEKTPIAIEI (136 aa)) the chain is on the cytoplasmic side. Positions 286-305 (SSLTGESEPQSRSSGFTHEN) are disordered. A helical membrane pass occupies residues 359-378 (EHFVHIVAGVAVSVGILFFI). The Lumenal portion of the chain corresponds to 379-390 (IAVCMKYHVLDA). The chain crosses the membrane as a helical span at residues 391–408 (IIFLIAIIVANVPEGLLA). Residues 409 to 842 (TVTVALSLTA…EEGRLIFDNL (434 aa)) are Cytoplasmic-facing. D446 serves as the catalytic 4-aspartylphosphate intermediate. The Mg(2+) site is built by D787 and D791. Residues 843–862 (KKTIAYTLTKNIAELCPFLI) traverse the membrane as a helical segment. The Lumenal portion of the chain corresponds to 863–872 (YIILGLPLPI). A helical transmembrane segment spans residues 873–893 (GTITLLFIDLGTDIIPSIALA). The Cytoplasmic segment spans residues 894-913 (YEKAESDIMNRKPRHKKKDR). Residues 914 to 936 (LVNQQLAVYSYLHIGLMQALGAF) form a helical membrane-spanning segment. Residues 937 to 988 (LVYFTVYAQQGFRPTSLFHLRIAWDSDHLNDLEDNYGQEWTSYQRQYLEWTG) are Lumenal-facing. The chain crosses the membrane as a helical span at residues 989–1008 (YTAFFVGIMVQQIADLIIRK). The Cytoplasmic segment spans residues 1009 to 1022 (TRKNSIFKQGLFRN). The residue at position 1013 (S1013) is a Phosphoserine; by PKA. The helical transmembrane segment at 1023–1041 (KVIWVGIASQIIVALLLSY) threads the bilayer. At 1042-1056 (GLGSITALNFTMLKA) the chain is on the lumenal side. Residues 1057-1077 (QYWFVAVPHAILIWVYDEMRK) traverse the membrane as a helical segment. Topologically, residues 1078–1094 (LFIRLYPGSWWDKNMYY) are cytoplasmic.

The protein belongs to the cation transport ATPase (P-type) (TC 3.A.3) family. Type IIC subfamily. In terms of assembly, the X(+)/K(+) ATPase pump is composed of a catalytic alpha subunit and an auxiliary non-catalytic beta subunit. The alpha subunit pairs with the beta subunit of gastric H(+)/K(+) ATPase ATP4B or the beta subunit of Na(+)/K(+) ATPases ATP1B1 and ATP1B3; this interaction is required for the formation of a functionally active pump and its targeting at the plasma membrane. As to expression, found in the skin, kidney, distal colon and brain. In the kidney it is found in the connecting tubule, cortical collecting duct and outer medullary collecting duct while in the brain it is specific to choroid plexus and cortex.

Its subcellular location is the apical cell membrane. The catalysed reaction is K(+)(out) + ATP + H2O + H(+)(in) = K(+)(in) + ADP + phosphate + 2 H(+)(out). The enzyme catalyses K(+)(out) + Na(+)(in) + ATP + H2O = K(+)(in) + Na(+)(out) + ADP + phosphate + H(+). In terms of biological role, the catalytic subunit of a H(+)/K(+) ATPase and/or Na(+)/K(+) ATPase pump which transports K(+) ions in exchange for Na(+) and/or H(+) ions across the apical membrane of epithelial cells. Uses ATP as an energy source to pump K(+) ions into the cell while transporting Na(+) and/or H(+) ions to the extracellular compartment. Involved in the maintenance of electrolyte homeostasis through K(+) ion absorption in kidney and colon. In the airway epithelium, may play a primary role in mucus acidification regulating its viscosity and clearance. This Oryctolagus cuniculus (Rabbit) protein is Potassium-transporting ATPase alpha chain 2 (ATP12A).